The chain runs to 398 residues: Cell division protein FtsZ (398 aa).

GTP is bound by residues 21-25 (GGGGN), 108-110 (GTG), Glu-139, Arg-143, and Asp-187.

This sequence belongs to the FtsZ family. In terms of assembly, homodimer. Polymerizes to form a dynamic ring structure in a strictly GTP-dependent manner. Interacts directly with several other division proteins.

It localises to the cytoplasm. Functionally, essential cell division protein that forms a contractile ring structure (Z ring) at the future cell division site. The regulation of the ring assembly controls the timing and the location of cell division. One of the functions of the FtsZ ring is to recruit other cell division proteins to the septum to produce a new cell wall between the dividing cells. Binds GTP and shows GTPase activity. The sequence is that of Cell division protein FtsZ from Pseudomonas putida (strain ATCC 47054 / DSM 6125 / CFBP 8728 / NCIMB 11950 / KT2440).